Consider the following 409-residue polypeptide: Elongation factor Tu, chloroplastic (409 aa).

The tr-type G domain maps to 10-214 (KPHINIGTIG…QVDSYIPTPT (205 aa)). The interval 19 to 26 (GHVDHGKT) is G1. 19 to 26 (GHVDHGKT) lines the GTP pocket. Thr26 contacts Mg(2+). At Lys57 the chain carries N6-methyllysine. The tract at residues 60–64 (GITIN) is G2. Residues 81 to 84 (DCPG) are G3. Residues 81-85 (DCPGH) and 136-139 (NKED) each bind GTP. The interval 136-139 (NKED) is G4. Positions 174–176 (SAL) are G5.

It belongs to the TRAFAC class translation factor GTPase superfamily. Classic translation factor GTPase family. EF-Tu/EF-1A subfamily.

The protein localises to the plastid. It localises to the chloroplast. It carries out the reaction GTP + H2O = GDP + phosphate + H(+). GTP hydrolase that promotes the GTP-dependent binding of aminoacyl-tRNA to the A-site of ribosomes during protein biosynthesis. The protein is Elongation factor Tu, chloroplastic (tufA) of Euglena gracilis.